We begin with the raw amino-acid sequence, 249 residues long: Triosephosphate isomerase (249 aa).

Substrate is bound by residues N12 and K14. N6-acetyllysine is present on K14. Y68 is modified (3'-nitrotyrosine). A Phosphoserine modification is found at S80. The Electrophile role is filled by H96. S106 carries the post-translational modification Phosphoserine. K142 participates in a covalent cross-link: Glycyl lysine isopeptide (Lys-Gly) (interchain with G-Cter in SUMO1). At K149 the chain carries N6-succinyllysine. K156 bears the N6-acetyllysine; alternate mark. Position 156 is an N6-succinyllysine; alternate (K156). A Phosphoserine modification is found at S159. E166 serves as the catalytic Proton acceptor. T173 bears the Phosphothreonine mark. The residue at position 194 (K194) is an N6-acetyllysine; alternate. K194 bears the N6-succinyllysine; alternate mark. K194 carries the N6-methyllysine; alternate modification. S198 bears the Phosphoserine mark. Y209 is modified (3'-nitrotyrosine). The residue at position 212 (S212) is a Phosphoserine. T214 bears the Phosphothreonine mark. S223 is subject to Phosphoserine. Residue K238 is modified to N6-acetyllysine.

It belongs to the triosephosphate isomerase family. Homodimer.

It is found in the cytoplasm. The enzyme catalyses dihydroxyacetone phosphate = methylglyoxal + phosphate. It carries out the reaction D-glyceraldehyde 3-phosphate = dihydroxyacetone phosphate. Its pathway is carbohydrate degradation; glycolysis; D-glyceraldehyde 3-phosphate from glycerone phosphate: step 1/1. It functions in the pathway carbohydrate biosynthesis; gluconeogenesis. Triosephosphate isomerase is an extremely efficient metabolic enzyme that catalyzes the interconversion between dihydroxyacetone phosphate (DHAP) and D-glyceraldehyde-3-phosphate (G3P) in glycolysis and gluconeogenesis. In terms of biological role, it is also responsible for the non-negligible production of methylglyoxal a reactive cytotoxic side-product that modifies and can alter proteins, DNA and lipids. The protein is Triosephosphate isomerase (TPI1) of Macaca fascicularis (Crab-eating macaque).